The following is a 581-amino-acid chain: Chaperonin GroEL 1 (581 aa).

ATP contacts are provided by residues 29–32 (TIGP), 86–90 (DGTTT), Gly413, and Asp492. Residues 522-543 (PEPEPAAPGGPSGDPMGGMGGM) form a disordered region. The span at 531–543 (GPSGDPMGGMGGM) shows a compositional bias: gly residues.

Belongs to the chaperonin (HSP60) family. In terms of assembly, forms a cylinder of 14 subunits composed of two heptameric rings stacked back-to-back. Interacts with the co-chaperonin GroES.

It localises to the cytoplasm. The enzyme catalyses ATP + H2O + a folded polypeptide = ADP + phosphate + an unfolded polypeptide.. Its function is as follows. Together with its co-chaperonin GroES, plays an essential role in assisting protein folding. The GroEL-GroES system forms a nano-cage that allows encapsulation of the non-native substrate proteins and provides a physical environment optimized to promote and accelerate protein folding. The polypeptide is Chaperonin GroEL 1 (Prochlorococcus marinus (strain MIT 9215)).